A 101-amino-acid polypeptide reads, in one-letter code: Integration host factor subunit alpha (101 aa).

It belongs to the bacterial histone-like protein family. As to quaternary structure, heterodimer of an alpha and a beta chain.

In terms of biological role, this protein is one of the two subunits of integration host factor, a specific DNA-binding protein that functions in genetic recombination as well as in transcriptional and translational control. In Maricaulis maris (strain MCS10) (Caulobacter maris), this protein is Integration host factor subunit alpha.